A 451-amino-acid polypeptide reads, in one-letter code: Tubulin alpha chain (451 aa).

Residue Gln11 participates in GTP binding. Lys40 carries the N6-acetyllysine modification. Residues Glu71, Gly144, Thr145, Thr179, Asn206, and Asn228 each coordinate GTP. Glu71 is a binding site for Mg(2+). Glu254 is a catalytic residue.

This sequence belongs to the tubulin family. In terms of assembly, dimer of alpha and beta chains. A typical microtubule is a hollow water-filled tube with an outer diameter of 25 nm and an inner diameter of 15 nM. Alpha-beta heterodimers associate head-to-tail to form protofilaments running lengthwise along the microtubule wall with the beta-tubulin subunit facing the microtubule plus end conferring a structural polarity. Microtubules usually have 13 protofilaments but different protofilament numbers can be found in some organisms and specialized cells. Requires Mg(2+) as cofactor. In terms of processing, undergoes a tyrosination/detyrosination cycle, the cyclic removal and re-addition of a C-terminal tyrosine residue by the enzymes tubulin tyrosine carboxypeptidase (TTCP) and tubulin tyrosine ligase (TTL), respectively. Post-translationally, acetylation of alpha chains at Lys-40 stabilizes microtubules and affects affinity and processivity of microtubule motors. This modification has a role in multiple cellular functions, ranging from cell motility, cell cycle progression or cell differentiation to intracellular trafficking and signaling.

The protein localises to the cytoplasm. The protein resides in the cytoskeleton. It carries out the reaction GTP + H2O = GDP + phosphate + H(+). Tubulin is the major constituent of microtubules, a cylinder consisting of laterally associated linear protofilaments composed of alpha- and beta-tubulin heterodimers. Microtubules grow by the addition of GTP-tubulin dimers to the microtubule end, where a stabilizing cap forms. Below the cap, tubulin dimers are in GDP-bound state, owing to GTPase activity of alpha-tubulin. The chain is Tubulin alpha chain (TUBA) from Chlorella vulgaris (Green alga).